We begin with the raw amino-acid sequence, 278 residues long: Putative protein-disulfide oxidoreductase RF_0032 (278 aa).

The N-terminal stretch at 1–18 is a signal peptide; that stretch reads MRSIFIVPIFLLFLSSCS. The segment at 62 to 84 is disordered; the sequence is VPANDNNQTDEVSTPPSQEQKNP. Residues 65-81 show a composition bias toward polar residues; the sequence is NDNNQTDEVSTPPSQEQ. One can recognise a Thioredoxin domain in the interval 77–266; that stretch reads PSQEQKNPEI…ISTAVDKALE (190 aa). Cysteines 119 and 122 form a disulfide.

It belongs to the thioredoxin family. DsbA subfamily.

It is found in the periplasm. Its function is as follows. May be required for disulfide bond formation in some proteins. This is Putative protein-disulfide oxidoreductase RF_0032 from Rickettsia felis (strain ATCC VR-1525 / URRWXCal2) (Rickettsia azadi).